The primary structure comprises 470 residues: MNPNQKIITIGSISLGLVVFNVLLHVVSIIVTVLVLGRGGNNGICNETVVREYNETVRIEKVTQWHNTSVVEYVPYWNEGTYMNNTEAICDVKGFAPFSKDNGIRIGSRGHVFVIREPFVSCSPTECRTFFLTQGSLLNDKHSNGTVKDRSPFRTLMSVEVGQSPNVYQARFEAVAWSATACHDGKKWMTVGVTGPDSKAVAVVHYGGVPTDVVNSWAGDILRTQESSCTCIQGDCYWVMTDGPANRQAQYRIYKANQGKIVGQTDVSFNGGHIEECSCYPNDGKVECVCRDNWTGTNRPVLVISPDLSYRVGYLCAGLPSDTPRGEDAQFTGSCTSPMGNQGYGVKGFGFRQGTDVWMGRTISRTSRSGFEILRVRNGWTQTSKEQVRKQVVVDNLNWSGYSGSFTLPVELSGKDCLVPCFWVEMIRGKPEEKTIWTSSSSIVMCGVDYEVADWSWHDGAILPFDIDKM.

The Intravirion segment spans residues 1–14 (MNPNQKIITIGSIS). Residues 11 to 32 (GSISLGLVVFNVLLHVVSIIVT) form an involved in apical transport and lipid raft association region. Residues 15–35 (LGLVVFNVLLHVVSIIVTVLV) form a helical membrane-spanning segment. The segment at 32-86 (TVLVLGRGGNNGICNETVVREYNETVRIEKVTQWHNTSVVEYVPYWNEGTYMNNT) is hypervariable stalk region. Over 36-470 (LGRGGNNGIC…AILPFDIDKM (435 aa)) the chain is Virion surface. Asn-46, Asn-54, Asn-67, and Asn-84 each carry an N-linked (GlcNAc...) asparagine; by host glycan. A head of neuraminidase region spans residues 89–470 (ICDVKGFAPF…AILPFDIDKM (382 aa)). 8 disulfides stabilise this stretch: Cys-90/Cys-417, Cys-122/Cys-127, Cys-182/Cys-229, Cys-231/Cys-236, Cys-277/Cys-290, Cys-279/Cys-288, Cys-316/Cys-335, and Cys-421/Cys-446. Residue Arg-116 coordinates substrate. Asn-144 carries an N-linked (GlcNAc...) asparagine; by host glycan. Asp-149 acts as the Proton donor/acceptor in catalysis. Position 150 (Arg-150) interacts with substrate. 275–276 (EE) contributes to the substrate binding site. Arg-291 is a substrate binding site. Position 292 (Asp-292) interacts with Ca(2+). Residue Asn-293 is glycosylated (N-linked (GlcNAc...) asparagine; by host). Positions 296 and 322 each coordinate Ca(2+). Arg-368 is a binding site for substrate. The N-linked (GlcNAc...) asparagine; by host glycan is linked to Asn-398. Tyr-402 serves as the catalytic Nucleophile.

It belongs to the glycosyl hydrolase 34 family. As to quaternary structure, homotetramer. It depends on Ca(2+) as a cofactor. N-glycosylated.

It is found in the virion membrane. Its subcellular location is the host apical cell membrane. The enzyme catalyses Hydrolysis of alpha-(2-&gt;3)-, alpha-(2-&gt;6)-, alpha-(2-&gt;8)- glycosidic linkages of terminal sialic acid residues in oligosaccharides, glycoproteins, glycolipids, colominic acid and synthetic substrates.. Its activity is regulated as follows. Inhibited by the neuraminidase inhibitors zanamivir (Relenza) and oseltamivir (Tamiflu). These drugs interfere with the release of progeny virus from infected cells and are effective against all influenza strains. Resistance to neuraminidase inhibitors is quite rare. Functionally, catalyzes the removal of terminal sialic acid residues from viral and cellular glycoconjugates. Cleaves off the terminal sialic acids on the glycosylated HA during virus budding to facilitate virus release. Additionally helps virus spread through the circulation by further removing sialic acids from the cell surface. These cleavages prevent self-aggregation and ensure the efficient spread of the progeny virus from cell to cell. Otherwise, infection would be limited to one round of replication. Described as a receptor-destroying enzyme because it cleaves a terminal sialic acid from the cellular receptors. May facilitate viral invasion of the upper airways by cleaving the sialic acid moieties on the mucin of the airway epithelial cells. Likely to plays a role in the budding process through its association with lipid rafts during intracellular transport. May additionally display a raft-association independent effect on budding. Plays a role in the determination of host range restriction on replication and virulence. Sialidase activity in late endosome/lysosome traffic seems to enhance virus replication. This is Neuraminidase from Aves (Horse).